Consider the following 261-residue polypeptide: MQLEFHQVDAFSSRPFSGNPAVVYRLDAWLADELMQMIATEHNLSETAFVVREGEAWRIRWFTPSVEVALCGHATLAAAHVLFEVYDEPGERLEFISRSGALRVNREDERLVLDFPAQYPSEVGSTVELEQALGLPPVDVLGSTDKLLVLLESEEAVRACRPDFAALARLPWRGVIVTARGLQKDFVSRFFAPAMGVDEDPVTGSAHCSLIPYWAQRLNKLSLTAQQCSARGGELWCRLEGERVSIAGHAVLVASGRIRLS.

Glu46 is an active-site residue.

Belongs to the PhzF family.

This is an uncharacterized protein from Pseudomonas aeruginosa (strain ATCC 15692 / DSM 22644 / CIP 104116 / JCM 14847 / LMG 12228 / 1C / PRS 101 / PAO1).